The following is a 257-amino-acid chain: MSDALIRLDQVGVTFGGEAVLDSIDLSVAPGQIVTLIGPNGAGKTTLVRAVLGLLKPHRGKVWRKPKLRIGYMPQKIQVDATLPLSVLRFLRLVPGVDRAAALSALQEVGAEQVIDSPIQTISGGEMQRVLLARALLREPQLLVLDEPVQGVDVVGQTELYNLITRLRDRHGCGVLMVSHDLHLVMSATDQVVCLNRHVCCSGHPEQVSGDPAFVELFGKTAPSLAIYHHHHDHSHDLHGSVVAPGTHVHGEHCKHG.

The 216-residue stretch at 6–221 folds into the ABC transporter domain; it reads IRLDQVGVTF…PAFVELFGKT (216 aa). 38–45 contributes to the ATP binding site; sequence GPNGAGKT.

The protein belongs to the ABC transporter superfamily. Zinc importer (TC 3.A.1.15.5) family. As to quaternary structure, the complex is composed of two ATP-binding proteins (ZnuC), two transmembrane proteins (ZnuB) and a solute-binding protein (ZnuA).

It is found in the cell inner membrane. It carries out the reaction Zn(2+)(out) + ATP(in) + H2O(in) = Zn(2+)(in) + ADP(in) + phosphate(in) + H(+)(in). Its function is as follows. Part of the ABC transporter complex ZnuABC involved in zinc import. Responsible for energy coupling to the transport system. This Pseudomonas putida (strain ATCC 47054 / DSM 6125 / CFBP 8728 / NCIMB 11950 / KT2440) protein is Zinc import ATP-binding protein ZnuC.